Consider the following 340-residue polypeptide: Glycerol-3-phosphate dehydrogenase [NAD(P)+] (340 aa).

4 residues coordinate NADPH: Ser14, Phe15, Arg35, and Lys109. Sn-glycerol 3-phosphate contacts are provided by Lys109 and Gly137. An NADPH-binding site is contributed by Ala141. 5 residues coordinate sn-glycerol 3-phosphate: Lys192, Asp245, Ser255, Arg256, and Asn257. Residue Lys192 is the Proton acceptor of the active site. Arg256 lines the NADPH pocket. The NADPH site is built by Val280 and Glu282.

The protein belongs to the NAD-dependent glycerol-3-phosphate dehydrogenase family.

It localises to the cytoplasm. It carries out the reaction sn-glycerol 3-phosphate + NAD(+) = dihydroxyacetone phosphate + NADH + H(+). The enzyme catalyses sn-glycerol 3-phosphate + NADP(+) = dihydroxyacetone phosphate + NADPH + H(+). It participates in membrane lipid metabolism; glycerophospholipid metabolism. In terms of biological role, catalyzes the reduction of the glycolytic intermediate dihydroxyacetone phosphate (DHAP) to sn-glycerol 3-phosphate (G3P), the key precursor for phospholipid synthesis. The sequence is that of Glycerol-3-phosphate dehydrogenase [NAD(P)+] from Teredinibacter turnerae (strain ATCC 39867 / T7901).